A 388-amino-acid polypeptide reads, in one-letter code: 3-dehydroquinate synthase (388 aa).

Belongs to the archaeal-type DHQ synthase family.

The catalysed reaction is 2-amino-2,3,7-trideoxy-D-lyxo-hept-6-ulosonate + NAD(+) + H2O = 3-dehydroquinate + NH4(+) + NADH + H(+). Catalyzes the oxidative deamination and cyclization of 2-amino-3,7-dideoxy-D-threo-hept-6-ulosonic acid (ADH) to yield 3-dehydroquinate (DHQ), which is fed into the canonical shikimic pathway of aromatic amino acid biosynthesis. This chain is 3-dehydroquinate synthase, found in Haloarcula marismortui (strain ATCC 43049 / DSM 3752 / JCM 8966 / VKM B-1809) (Halobacterium marismortui).